Consider the following 103-residue polypeptide: Large ribosomal subunit protein bL21 (103 aa).

It belongs to the bacterial ribosomal protein bL21 family. Part of the 50S ribosomal subunit. Contacts protein L20.

In terms of biological role, this protein binds to 23S rRNA in the presence of protein L20. The protein is Large ribosomal subunit protein bL21 of Cupriavidus pinatubonensis (strain JMP 134 / LMG 1197) (Cupriavidus necator (strain JMP 134)).